A 582-amino-acid chain; its full sequence is External alternative NAD(P)H-ubiquinone oxidoreductase B2, mitochondrial (582 aa).

The transit peptide at 1 to 38 directs the protein to the mitochondrion; sequence MRNFSVFERFSKAFKDHPSLTRILVVSTISGGGLIAYS. 60–90 serves as a coordination point for FAD; it reads KVVLLGTGWAGTSFLKNLNNSQYEVQIISPR. 223 to 259 contacts NAD(+); sequence LHFVVVGGGPTGVEFAAELHDFVTEDLVSLYPRAKGS. Residues 379–414 enclose the EF-hand domain; that stretch reads KVMEDVSAIFSKADKDKSGTLTLKEFQEAMDDICVR. 5 residues coordinate Ca(2+): D392, D394, S396, T398, and E403. The Microbody targeting signal motif lies at 573 to 582; sequence FIFGRDSSSI.

The protein belongs to the NADH dehydrogenase family. FAD serves as cofactor. Mostly expressed in seedlings and roots and, to a lower extent, in cotyledons, leaves, stems, buds and flowers.

The protein resides in the mitochondrion inner membrane. The protein localises to the peroxisome. The enzyme catalyses a quinone + NADH + H(+) = a quinol + NAD(+). It carries out the reaction a ubiquinone + NADH + H(+) = a ubiquinol + NAD(+). With respect to regulation, NADPH oxidase activity is stimulated by calcium ions. Alternative NADH-ubiquinone oxidoreductase which catalyzes the oxidation of mitochondrial NADH does not translocate protons across the inner mitochondrial membrane. Calcium-dependent NAD(P)H dehydrogenase; more efficient on NADH. Binds calcium ions. The sequence is that of External alternative NAD(P)H-ubiquinone oxidoreductase B2, mitochondrial (NDB2) from Arabidopsis thaliana (Mouse-ear cress).